Consider the following 377-residue polypeptide: Cell division protein FtsZ (377 aa).

Over residues Met-1–Gly-16 the composition is skewed to acidic residues. Residues Met-1–Thr-33 are disordered. GTP contacts are provided by residues Gly-57–Asn-61, Gly-144–Gly-146, Glu-175, Arg-179, and Asp-222.

It belongs to the FtsZ family. Homodimer. Polymerizes to form a dynamic ring structure in a strictly GTP-dependent manner. Interacts directly with several other division proteins.

The protein localises to the cytoplasm. Its function is as follows. Essential cell division protein that forms a contractile ring structure (Z ring) at the future cell division site. The regulation of the ring assembly controls the timing and the location of cell division. One of the functions of the FtsZ ring is to recruit other cell division proteins to the septum to produce a new cell wall between the dividing cells. Binds GTP and shows GTPase activity. This chain is Cell division protein FtsZ, found in Haloferax mediterranei (strain ATCC 33500 / DSM 1411 / JCM 8866 / NBRC 14739 / NCIMB 2177 / R-4) (Halobacterium mediterranei).